Reading from the N-terminus, the 682-residue chain is Heat shock 70 kDa protein 10, mitochondrial (682 aa).

A mitochondrion-targeting transit peptide spans 1 to 50 (MATAALLRSIRRREVVSSPFSAYRCLSSSGKASLNSSYLGQNFRSFSRAF). A disordered region spans residues 646–682 (KIGEHMSGGSGGGSAPGGGSEGGSDQAPEAEYEEVKK). Positions 651 to 667 (MSGGSGGGSAPGGGSEG) are enriched in gly residues. Residues 673–682 (PEAEYEEVKK) show a composition bias toward acidic residues.

It belongs to the heat shock protein 70 (TC 1.A.33) family. DnaK subfamily.

It is found in the mitochondrion. Chaperone involved in the maturation of iron-sulfur [Fe-S] cluster-containing proteins. Has a low intrinsic ATPase activity which is markedly stimulated by HSCB and ISU1. In cooperation with other chaperones, Hsp70s are key components that facilitate folding of de novo synthesized proteins, assist translocation of precursor proteins into organelles, and are responsible for degradation of damaged protein under stress conditions. The polypeptide is Heat shock 70 kDa protein 10, mitochondrial (Arabidopsis thaliana (Mouse-ear cress)).